Consider the following 61-residue polypeptide: DGYILNSKGCKVSCVVSIVYCNSMCKSSGGSYGYCWTWGLACWCEGLPNSKRWTSSKNKCN.

The region spanning 1–61 (DGYILNSKGC…RWTSSKNKCN (61 aa)) is the LCN-type CS-alpha/beta domain. Intrachain disulfides connect cysteine 10–cysteine 60, cysteine 14–cysteine 35, cysteine 21–cysteine 42, and cysteine 25–cysteine 44.

It belongs to the long (4 C-C) scorpion toxin superfamily. Sodium channel inhibitor family. Beta subfamily. Expressed by the venom gland.

The protein localises to the secreted. In terms of biological role, depressant insect beta-toxins cause a transient contraction paralysis followed by a slow flaccid paralysis. They bind voltage-independently at site-4 of sodium channels (Nav) and shift the voltage of activation toward more negative potentials thereby affecting sodium channel activation and promoting spontaneous and repetitive firing. This toxin is active only on insects. This is Insect toxin BsIT3 from Hottentotta tamulus sindicus (Scorpion).